A 493-amino-acid polypeptide reads, in one-letter code: 6-phosphogluconate dehydrogenase, decarboxylating (493 aa).

NADP(+) contacts are provided by residues 12 to 17 (GLAVMG), 35 to 37 (NRT), 77 to 79 (VKA), and N105. Substrate-binding positions include N105 and 131–133 (SGG). The active-site Proton acceptor is K187. 190–191 (HN) serves as a coordination point for substrate. Catalysis depends on E194, which acts as the Proton donor. Substrate-binding residues include Y195, K266, R293, R456, and H462.

This sequence belongs to the 6-phosphogluconate dehydrogenase family. As to quaternary structure, homodimer.

It catalyses the reaction 6-phospho-D-gluconate + NADP(+) = D-ribulose 5-phosphate + CO2 + NADPH. Its pathway is carbohydrate degradation; pentose phosphate pathway; D-ribulose 5-phosphate from D-glucose 6-phosphate (oxidative stage): step 3/3. Its function is as follows. Catalyzes the oxidative decarboxylation of 6-phosphogluconate to ribulose 5-phosphate and CO(2), with concomitant reduction of NADP to NADPH. The protein is 6-phosphogluconate dehydrogenase, decarboxylating (gnd) of Dictyostelium discoideum (Social amoeba).